The sequence spans 273 residues: tRNA pseudouridine synthase A (273 aa).

Residue D52 is the Nucleophile of the active site. Substrate is bound at residue Y110.

The protein belongs to the tRNA pseudouridine synthase TruA family. Homodimer.

The catalysed reaction is uridine(38/39/40) in tRNA = pseudouridine(38/39/40) in tRNA. Its function is as follows. Formation of pseudouridine at positions 38, 39 and 40 in the anticodon stem and loop of transfer RNAs. This chain is tRNA pseudouridine synthase A, found in Cupriavidus pinatubonensis (strain JMP 134 / LMG 1197) (Cupriavidus necator (strain JMP 134)).